A 130-amino-acid polypeptide reads, in one-letter code: S-protein homolog 30 (130 aa).

N64 and N77 each carry an N-linked (GlcNAc...) asparagine glycan.

Belongs to the plant self-incompatibility (S1) protein family.

Its subcellular location is the secreted. In Arabidopsis thaliana (Mouse-ear cress), this protein is S-protein homolog 30.